Consider the following 328-residue polypeptide: GMP reductase (328 aa).

C176 (thioimidate intermediate) is an active-site residue. I205 to I228 provides a ligand contact to NADP(+).

Belongs to the IMPDH/GMPR family. GuaC type 2 subfamily.

The enzyme catalyses IMP + NH4(+) + NADP(+) = GMP + NADPH + 2 H(+). In terms of biological role, catalyzes the irreversible NADPH-dependent deamination of GMP to IMP. It functions in the conversion of nucleobase, nucleoside and nucleotide derivatives of G to A nucleotides, and in maintaining the intracellular balance of A and G nucleotides. In Streptococcus pneumoniae (strain Taiwan19F-14), this protein is GMP reductase.